Consider the following 92-residue polypeptide: Small ribosomal subunit protein uS19 (92 aa).

Belongs to the universal ribosomal protein uS19 family.

Protein S19 forms a complex with S13 that binds strongly to the 16S ribosomal RNA. This chain is Small ribosomal subunit protein uS19, found in Enterococcus faecalis (strain ATCC 700802 / V583).